Consider the following 513-residue polypeptide: Transmembrane protein 151B (513 aa).

A disordered region spans residues 1 to 29; the sequence is MSPAAPVTESSAAEVHREQTDAPREPQRP. The segment covering 14-28 has biased composition (basic and acidic residues); sequence EVHREQTDAPREPQR. 3 helical membrane-spanning segments follow: residues 46–66, 93–113, and 274–294; these read CLLL…CQVT, YIYI…VECW, and LPWY…LSWP. N-linked (GlcNAc...) asparagine glycosylation is found at asparagine 366, asparagine 418, and asparagine 505.

This sequence belongs to the TMEM151 family.

Its subcellular location is the membrane. This Danio rerio (Zebrafish) protein is Transmembrane protein 151B (tmem151b).